The following is a 281-amino-acid chain: UPF0162 protein PD_0709 (281 aa).

TPR repeat units follow at residues 193-226 (VRIL…VPNQ) and 227-260 (PEAL…YPST).

It belongs to the UPF0162 family.

The polypeptide is UPF0162 protein PD_0709 (Xylella fastidiosa (strain Temecula1 / ATCC 700964)).